The chain runs to 472 residues: L-aspartate oxidase (472 aa).

FAD contacts are provided by residues 7 to 10 (SGIA), serine 29, 36 to 37 (ST), 42 to 43 (GG), and aspartate 191. The active-site Proton donor/acceptor is the arginine 257. Residues glutamate 337 and 353–354 (SL) each bind FAD.

This sequence belongs to the FAD-dependent oxidoreductase 2 family. NadB subfamily. As to quaternary structure, monomer. The cofactor is FAD.

The protein resides in the cytoplasm. The catalysed reaction is L-aspartate + O2 = iminosuccinate + H2O2. It functions in the pathway cofactor biosynthesis; NAD(+) biosynthesis; iminoaspartate from L-aspartate (oxidase route): step 1/1. In terms of biological role, catalyzes the oxidation of L-aspartate to iminoaspartate, the first step in the de novo biosynthesis of NAD(+). Can also use L-asparagine, but not L-phenylalanine, L-glutamate, glycine, L-proline, L-alanine and D-aspartate. The chain is L-aspartate oxidase from Sulfurisphaera tokodaii (strain DSM 16993 / JCM 10545 / NBRC 100140 / 7) (Sulfolobus tokodaii).